A 236-amino-acid polypeptide reads, in one-letter code: Lipoprotein signal peptidase (236 aa).

The next 4 helical transmembrane spans lie at 8–28 (FYGI…WVYF), 44–64 (WFKL…FGFT), 68–88 (VLLT…IWNL), and 98–118 (LLWG…DSIF). Active-site residues include aspartate 141 and aspartate 174. The chain crosses the membrane as a helical span at residues 166-186 (CLPVFNLADVAILAGVALIVL).

Belongs to the peptidase A8 family.

Its subcellular location is the cell inner membrane. It catalyses the reaction Release of signal peptides from bacterial membrane prolipoproteins. Hydrolyzes -Xaa-Yaa-Zaa-|-(S,diacylglyceryl)Cys-, in which Xaa is hydrophobic (preferably Leu), and Yaa (Ala or Ser) and Zaa (Gly or Ala) have small, neutral side chains.. It participates in protein modification; lipoprotein biosynthesis (signal peptide cleavage). This protein specifically catalyzes the removal of signal peptides from prolipoproteins. This chain is Lipoprotein signal peptidase, found in Amoebophilus asiaticus (strain 5a2).